We begin with the raw amino-acid sequence, 577 residues long: Arginine--tRNA ligase (577 aa).

A 'HIGH' region motif is present at residues 122–132 (PNVAKEMHVGH).

The protein belongs to the class-I aminoacyl-tRNA synthetase family. Monomer.

The protein localises to the cytoplasm. The catalysed reaction is tRNA(Arg) + L-arginine + ATP = L-arginyl-tRNA(Arg) + AMP + diphosphate. The sequence is that of Arginine--tRNA ligase from Salmonella agona (strain SL483).